The following is a 287-amino-acid chain: Iodotyrosine deiodinase (287 aa).

Residues 15–34 traverse the membrane as a helical segment; the sequence is HWPSLFITLALIWIVKRLFF. FMN is bound by residues 96-100, serine 125, and 125-126; these read RRSIR and SG. Positions 127, 154, 158, and 179 each coordinate 3,5-diiodo-L-tyrosine. 3-iodo-L-tyrosine-binding residues include alanine 127, glutamate 154, tyrosine 158, and lysine 179. FMN contacts are provided by residues 235 to 237 and arginine 277; that span reads VTT.

It belongs to the nitroreductase family. As to quaternary structure, homodimer. Requires FMN as cofactor. Expressed in spermatocytes.

The protein resides in the cell membrane. The enzyme catalyses 2 iodide + L-tyrosine + 2 NADP(+) = 3,5-diiodo-L-tyrosine + 2 NADPH + H(+). It carries out the reaction iodide + L-tyrosine + NADP(+) = 3-iodo-L-tyrosine + NADPH. It catalyses the reaction 3-iodo-L-tyrosine + iodide + NADP(+) = 3,5-diiodo-L-tyrosine + NADPH + H(+). The catalysed reaction is L-tyrosine + chloride + NADP(+) = 3-chloro-L-tyrosine + NADPH. The enzyme catalyses bromide + L-tyrosine + NADP(+) = 3-bromo-L-tyrosine + NADPH. In terms of biological role, catalyzes the dehalogenation of halotyrosines such as 3-bromo-L-tyrosine, 3-chloro-L-tyrosine, 3-iodo-L-tyrosine and 3,5-diiodo-L-tyrosine. Activity towards 3-fluoro-L-tyrosine is weak. Important for male and female fertility. May be involved in maintaining the viability of sperm, both during development in the testes and storage in the female spermatheca. This chain is Iodotyrosine deiodinase, found in Drosophila melanogaster (Fruit fly).